The sequence spans 276 residues: NAD kinase (276 aa).

Residue Asp61 is the Proton acceptor of the active site. Residues 61–62 (DG), Arg66, 135–136 (NE), Arg146, His163, Asp165, and Ala200 each bind NAD(+).

It belongs to the NAD kinase family. The cofactor is a divalent metal cation.

The protein resides in the cytoplasm. The catalysed reaction is NAD(+) + ATP = ADP + NADP(+) + H(+). Functionally, involved in the regulation of the intracellular balance of NAD and NADP, and is a key enzyme in the biosynthesis of NADP. Catalyzes specifically the phosphorylation on 2'-hydroxyl of the adenosine moiety of NAD to yield NADP. In Chloroflexus aurantiacus (strain ATCC 29366 / DSM 635 / J-10-fl), this protein is NAD kinase.